Consider the following 239-residue polypeptide: Sugar fermentation stimulation protein homolog (239 aa).

This sequence belongs to the SfsA family.

This Maridesulfovibrio salexigens (strain ATCC 14822 / DSM 2638 / NCIMB 8403 / VKM B-1763) (Desulfovibrio salexigens) protein is Sugar fermentation stimulation protein homolog.